Here is a 130-residue protein sequence, read N- to C-terminus: Methylglyoxal synthase (130 aa).

Residues 1-130 form the MGS-like domain; that stretch reads MSKPRIALIA…DLARTMQDVC (130 aa). Substrate contacts are provided by residues His11, Lys15, 37–40, and 57–58; these read TGTT and SG. Catalysis depends on Asp63, which acts as the Proton donor/acceptor. His90 contacts substrate.

The protein belongs to the methylglyoxal synthase family.

It catalyses the reaction dihydroxyacetone phosphate = methylglyoxal + phosphate. Its function is as follows. Catalyzes the formation of methylglyoxal from dihydroxyacetone phosphate. The polypeptide is Methylglyoxal synthase (Burkholderia multivorans (strain ATCC 17616 / 249)).